The following is a 283-amino-acid chain: Bifunctional protein FolD (283 aa).

Residues 164-166, serine 189, and isoleucine 230 contribute to the NADP(+) site; that span reads GRS.

The protein belongs to the tetrahydrofolate dehydrogenase/cyclohydrolase family. In terms of assembly, homodimer.

The enzyme catalyses (6R)-5,10-methylene-5,6,7,8-tetrahydrofolate + NADP(+) = (6R)-5,10-methenyltetrahydrofolate + NADPH. It catalyses the reaction (6R)-5,10-methenyltetrahydrofolate + H2O = (6R)-10-formyltetrahydrofolate + H(+). It participates in one-carbon metabolism; tetrahydrofolate interconversion. In terms of biological role, catalyzes the oxidation of 5,10-methylenetetrahydrofolate to 5,10-methenyltetrahydrofolate and then the hydrolysis of 5,10-methenyltetrahydrofolate to 10-formyltetrahydrofolate. This chain is Bifunctional protein FolD, found in Pelobacter propionicus (strain DSM 2379 / NBRC 103807 / OttBd1).